A 447-amino-acid chain; its full sequence is Alpha-1,3-mannosyl-glycoprotein 2-beta-N-acetylglucosaminyltransferase (447 aa).

The Cytoplasmic segment spans residues 1–6; it reads MLKKQT. The helical; Signal-anchor for type II membrane protein transmembrane segment at 7 to 29 threads the bilayer; the sequence is AGLVLWGAIIFVGWNALLLLFFW. Topologically, residues 30–447 are lumenal; sequence TRPAPGRLPS…TWTGYDPSWN (418 aa). A disulfide bond links Cys-115 and Cys-145. Residues Arg-117, Asp-144, His-190, and Asp-212 each contribute to the substrate site. Mn(2+) is bound at residue Asp-213. Cys-239 and Cys-305 are disulfide-bonded. The Proton acceptor role is filled by Asp-291. Ser-322 contacts substrate.

It belongs to the glycosyltransferase 13 family. In terms of assembly, interacts with MGAT4D. Interacts with BRI3. It depends on Mn(2+) as a cofactor. In terms of tissue distribution, detected in kidney, liver and brain.

The protein resides in the golgi apparatus membrane. The protein localises to the cytoplasm. It is found in the perinuclear region. The catalysed reaction is N(4)-(alpha-D-Man-(1-&gt;3)-[alpha-D-Man-(1-&gt;3)-[alpha-D-Man-(1-&gt;6)]-alpha-D-Man-(1-&gt;6)]-beta-D-Man-(1-&gt;4)-beta-D-GlcNAc-(1-&gt;4)-beta-D-GlcNAc)-L-asparaginyl-[protein] (N-glucan mannose isomer 5A1,2) + UDP-N-acetyl-alpha-D-glucosamine = N(4)-{beta-D-GlcNAc-(1-&gt;2)-alpha-D-Man-(1-&gt;3)-[alpha-D-Man-(1-&gt;3)-[alpha-D-Man-(1-&gt;6)]-alpha-D-Man-(1-&gt;6)]-beta-D-Man-(1-&gt;4)-beta-D-GlcNAc-(1-&gt;4)-beta-D-GlcNAc}-L-asparaginyl-[protein] + UDP + H(+). Its pathway is protein modification; protein glycosylation. In terms of biological role, initiates complex N-linked carbohydrate formation. Essential for the conversion of high-mannose to hybrid and complex N-glycans. The chain is Alpha-1,3-mannosyl-glycoprotein 2-beta-N-acetylglucosaminyltransferase (Mgat1) from Mus musculus (Mouse).